A 217-amino-acid polypeptide reads, in one-letter code: 3,4-dihydroxy-2-butanone 4-phosphate synthase (217 aa).

Residues Arg40–Glu41, Asp45, Arg153–Thr157, and Glu177 each bind D-ribulose 5-phosphate. Residue Glu41 coordinates Mg(2+). His156 lines the Mg(2+) pocket.

Belongs to the DHBP synthase family. Homodimer. Requires Mg(2+) as cofactor. It depends on Mn(2+) as a cofactor.

The enzyme catalyses D-ribulose 5-phosphate = (2S)-2-hydroxy-3-oxobutyl phosphate + formate + H(+). It functions in the pathway cofactor biosynthesis; riboflavin biosynthesis; 2-hydroxy-3-oxobutyl phosphate from D-ribulose 5-phosphate: step 1/1. In terms of biological role, catalyzes the conversion of D-ribulose 5-phosphate to formate and 3,4-dihydroxy-2-butanone 4-phosphate. This chain is 3,4-dihydroxy-2-butanone 4-phosphate synthase, found in Aliivibrio fischeri (Vibrio fischeri).